The following is a 117-amino-acid chain: MKIPVPYAWTPDFKTTYENIDSEHRTLFNGLFALSEFNTQHQLNAAIEVFTLHFHDEQGQMIRSNYVNTKEHTDIHNGFMDTMRGWQSPVPQKALKDGMEWLANHIPTEDFKYKGKL.

His24, His53, Glu57, His72, His76, His105, and Asp110 together coordinate Fe cation.

It belongs to the hemerythrin family. In terms of assembly, octamer composed of two types of chains: alpha and beta.

Its function is as follows. Hemerythrin is a respiratory protein in blood cells of certain marine worms. The oxygen-binding site in each chain contains two iron atoms. This Lingula anatina (Brachiopod) protein is Hemerythrin subunit beta.